The primary structure comprises 60 residues: Metallothionein A (60 aa).

The beta stretch occupies residues Met1–Cys28. Residues Cys4, Cys6, Cys12, Cys14, Cys18, Cys20, Cys23, Cys25, Cys28, Cys32, Cys33, Cys35, Cys36, Cys40, Cys43, Cys47, Cys49, Cys54, Cys58, and Cys59 each coordinate a divalent metal cation. The interval Lys29–Gln60 is alpha.

This sequence belongs to the metallothionein superfamily. Type 1 family.

Its function is as follows. Metallothioneins have a high content of cysteine residues that bind various heavy metals. In Chionodraco rastrospinosus (Ocellated icefish), this protein is Metallothionein A (mta).